The chain runs to 78 residues: Exodeoxyribonuclease 7 small subunit (78 aa).

This sequence belongs to the XseB family. In terms of assembly, heterooligomer composed of large and small subunits.

The protein resides in the cytoplasm. The enzyme catalyses Exonucleolytic cleavage in either 5'- to 3'- or 3'- to 5'-direction to yield nucleoside 5'-phosphates.. Functionally, bidirectionally degrades single-stranded DNA into large acid-insoluble oligonucleotides, which are then degraded further into small acid-soluble oligonucleotides. This is Exodeoxyribonuclease 7 small subunit from Paracoccus zeaxanthinifaciens.